The chain runs to 583 residues: Alpha-1,3-arabinosyltransferase XAT2 (583 aa).

Over 1-21 (MKPVERAKLVRSLRQESRRLR) the chain is Cytoplasmic. The chain crosses the membrane as a helical; Signal-anchor for type II membrane protein span at residues 22 to 42 (LLVLVIGFFLVTLTFVVISKP). At 43–583 (DALLFNLNGR…LLEVLDQLNQ (541 aa)) the chain is on the lumenal side. The tract at residues 73-178 (RRSADTFPAA…NGKQEDGKPN (106 aa)) is disordered. Basic and acidic residues-rich tracts occupy residues 102–121 (TSEE…KNEE) and 135–146 (EDNKNGEEEGHT). The span at 149–160 (SKVTLPTVSNYT) shows a compositional bias: polar residues. Asn158 carries N-linked (GlcNAc...) asparagine glycosylation. The segment covering 162–178 (RDAEDTDNGKQEDGKPN) has biased composition (basic and acidic residues). N-linked (GlcNAc...) asparagine glycosylation is found at Asn229, Asn382, Asn450, and Asn485.

It belongs to the glycosyltransferase 61 family.

It localises to the golgi apparatus membrane. It functions in the pathway glycan metabolism. Its function is as follows. Glycosyltransferase involved in the arabinosylation of xylan, the major hemicellulose (non-cellulosic component) of primary and secondary walls of angiosperms. Possesses alpha-1,3-arabinosyltransferase activity, transferring an arabinofuranose residue to the xylan backbone. This chain is Alpha-1,3-arabinosyltransferase XAT2, found in Oryza sativa subsp. japonica (Rice).